Reading from the N-terminus, the 214-residue chain is Phosphoenolpyruvate guanylyltransferase 2 (214 aa).

Phosphoenolpyruvate-binding residues include T135, G150, and S153.

It belongs to the CofC family.

The enzyme catalyses phosphoenolpyruvate + GTP + H(+) = enolpyruvoyl-2-diphospho-5'-guanosine + diphosphate. It participates in cofactor biosynthesis; coenzyme F420 biosynthesis. In terms of biological role, guanylyltransferase that catalyzes the activation of phosphoenolpyruvate (PEP) as enolpyruvoyl-2-diphospho-5'-guanosine, via the condensation of PEP with GTP. It is involved in the biosynthesis of coenzyme F420, a hydride carrier cofactor. This Rhodococcus jostii (strain RHA1) protein is Phosphoenolpyruvate guanylyltransferase 2.